A 182-amino-acid chain; its full sequence is Troponin I, fast skeletal muscle (182 aa).

Gly-2 bears the N-acetylglycine mark. Residues 2 to 48 (GDEEKRNRAITARRQHLKSVMLQIAATELEKEEGRREAEKQNYLAEH) form an involved in binding TNC region. Thr-12 carries the post-translational modification Phosphothreonine; by PHK. The segment at 97-117 (NQKLFDLRGKFKRPPLRRVRM) is involved in binding TNC and actin. Position 118 is a phosphoserine; by PKA (Ser-118).

This sequence belongs to the troponin I family. Binds to actin and tropomyosin.

Troponin I is the inhibitory subunit of troponin, the thin filament regulatory complex which confers calcium-sensitivity to striated muscle actomyosin ATPase activity. The polypeptide is Troponin I, fast skeletal muscle (TNNI2) (Oryctolagus cuniculus (Rabbit)).